Here is a 327-residue protein sequence, read N- to C-terminus: Tumor necrosis factor receptor superfamily member 6 (327 aa).

An N-terminal signal peptide occupies residues 1 to 21 (MLWIWAVLPLVLAGSQLRVHT). Residues 22–169 (QGTNSISESL…NCRKQSPRNR (148 aa)) are Extracellular-facing. Asparagine 43 is a glycosylation site (N-linked (GlcNAc...) asparagine). 3 TNFR-Cys repeats span residues 43–79 (NCSE…PTCA), 80–123 (PCTE…NTKC), and 124–162 (KCKP…TNCR). Intrachain disulfides connect cysteine 44–cysteine 55, cysteine 56–cysteine 69, cysteine 59–cysteine 78, cysteine 81–cysteine 97, cysteine 100–cysteine 115, cysteine 103–cysteine 123, cysteine 125–cysteine 139, cysteine 142–cysteine 153, and cysteine 145–cysteine 161. Asparagine 114 is a glycosylation site (N-linked (GlcNAc...) asparagine). The chain crosses the membrane as a helical span at residues 170–186 (LWLLTILVLLIPLVFIY). Topologically, residues 187-327 (RKYRKRKCWK…GNENEGQCLE (141 aa)) are cytoplasmic. Cysteine 194 is lipidated: S-palmitoyl cysteine. The interval 204–309 (SRTSSRETIP…DKFQDMVQKD (106 aa)) is interaction with HIPK3. Threonine 206 is modified (phosphothreonine). Residues serine 217 and serine 220 each carry the phosphoserine modification. Positions 222–246 (SKYIPRIAEDMTIQEAKKFARENNI) are interaction with CALM. The region spanning 222–306 (SKYIPRIAED…RTLDKFQDMV (85 aa)) is the Death domain. A disordered region spans residues 308–327 (KDLGKSTPDTGNENEGQCLE). Position 314 is a phosphothreonine (threonine 314). The segment covering 314–327 (TPDTGNENEGQCLE) has biased composition (polar residues).

In terms of assembly, component of the death-induced signaling complex (DISC) composed of cell surface receptor FAS/CD95, adapter protein FADD and the CASP8 protease; recruitment of CASP8 to the complex is required for processing of CASP8 into the p18 and p10 subunits. Interacts directly (via DED domain) with NOL3 (via CARD domain); inhibits death-inducing signaling complex (DISC) assembly by inhibiting the increase in FAS-FADD binding induced by FAS activation. Binds DAXX. Interacts with HIPK3. Part of a complex containing HIPK3 and FADD. Binds RIPK1 and FAIM2. Interacts with BABAM2 and FEM1B. Interacts with CALM. In the absence of stimulation, interacts with BIRC2, DDX3X and GSK3B. The interaction with BIRC2 and DDX3X is further enhanced upon receptor stimulation and accompanied by DDX3X and BIRC2 cleavage. In terms of processing, palmitoylated. Palmitoylation by ZDHHC7 prevents the lysosomal degradation of FAS regulating its expression at the plasma membrane. Detected in various tissues including thymus, liver, lung, heart, and adult ovary.

Its subcellular location is the cell membrane. It is found in the membrane raft. Its function is as follows. Receptor for TNFSF6/FASLG. The adapter molecule FADD recruits caspase CASP8 to the activated receptor. The resulting death-inducing signaling complex (DISC) performs CASP8 proteolytic activation which initiates the subsequent cascade of caspases (aspartate-specific cysteine proteases) mediating apoptosis. FAS-mediated apoptosis may have a role in the induction of peripheral tolerance, in the antigen-stimulated suicide of mature T-cells, or both. This Mus musculus (Mouse) protein is Tumor necrosis factor receptor superfamily member 6 (Fas).